We begin with the raw amino-acid sequence, 259 residues long: Protein unc-50 homolog (259 aa).

Residue Met1 is modified to N-acetylmethionine. Residues 1–17 are compositionally biased toward polar residues; that stretch reads MLPSTSVNSPAQGNGVL. The interval 1–22 is disordered; the sequence is MLPSTSVNSPAQGNGVLSSRDA. At 1 to 82 the chain is on the cytoplasmic side; that stretch reads MLPSTSVNSP…TKDQWARDDP (82 aa). Phosphoserine is present on Ser6. The chain crosses the membrane as a helical span at residues 83 to 103; the sequence is AFLVLLSIWLCVSTIGFGFVL. Residues 104–115 are Lumenal-facing; sequence DMGFFETIKLLL. The chain crosses the membrane as a helical span at residues 116 to 136; that stretch reads WVVFIDCVGVGLLISTLMWFI. Over 137 to 163 the chain is Cytoplasmic; it reads SNKYLVKRQSRDYDVEWGYAFDVHLNA. A helical membrane pass occupies residues 164-184; sequence FYPLLVILHFIQLFFINHVIL. At 185–187 the chain is on the lumenal side; sequence TDT. Residues 188–208 form a helical membrane-spanning segment; the sequence is FIGYLVGNTLWLVAVGYYIYV. Residues 209-222 are Cytoplasmic-facing; the sequence is TFLGYSALPFLKNT. Residues 223 to 243 traverse the membrane as a helical segment; sequence VILLYPFAPLILLYGLSLALG. Residues 244 to 259 are Lumenal-facing; it reads WNFTHTLCSFYKYRVK.

This sequence belongs to the unc-50 family.

It is found in the nucleus inner membrane. The protein localises to the golgi apparatus membrane. Functionally, involved in the cell surface expression of neuronal nicotinic receptors. Binds RNA. This is Protein unc-50 homolog (UNC50) from Bos taurus (Bovine).